A 348-amino-acid chain; its full sequence is MKIILLYGGRSEEHDVSVLSAYSVLNAIYYKYYQVQLVFISKDGQWVKGPLLSERPQNKEVLHLTWAQTPEETGEFSGKRISPSEIYEEEAIVFPVLHGPNGEDGTIQGFMETINMPYVGAGVLASANAMDKIMTKYLLQTVGIPQVPFVPVLRSDWKGNPKEVFEKCEGSLIYPVFVKPANMGSSVGISKVENREELQEALEEAFRYDARAIVEQGIEAREIEVAILGNEDVRTTLPGEVVKDVAFYDYDAKYINNTIEMQIPAHVPEEVAHQAQEYAKKAYIMLDGSGLSRCDFFLTSKNELFLNELNTMPGFTDFSMYPLLWENMGLKYSDLIEELIQLALNRFK.

One can recognise an ATP-grasp domain in the interval 136 to 341 (KYLLQTVGIP…YSDLIEELIQ (206 aa)). 169–224 (EGSLIYPVFVKPANMGSSVGISKVENREELQEALEEAFRYDARAIVEQGIEAREIE) serves as a coordination point for ATP. The Mg(2+) site is built by D295, E308, and N310.

This sequence belongs to the D-alanine--D-alanine ligase family. It depends on Mg(2+) as a cofactor. The cofactor is Mn(2+).

The protein localises to the cytoplasm. The enzyme catalyses 2 D-alanine + ATP = D-alanyl-D-alanine + ADP + phosphate + H(+). It functions in the pathway cell wall biogenesis; peptidoglycan biosynthesis. Functionally, cell wall formation. In Enterococcus faecalis (strain ATCC 700802 / V583), this protein is D-alanine--D-alanine ligase (ddl).